The chain runs to 290 residues: Phosphoribulokinase (290 aa).

12 to 20 (GSSGAGTTS) contacts ATP.

Belongs to the phosphoribulokinase family.

The enzyme catalyses D-ribulose 5-phosphate + ATP = D-ribulose 1,5-bisphosphate + ADP + H(+). It functions in the pathway carbohydrate biosynthesis; Calvin cycle. In Nitrobacter vulgaris, this protein is Phosphoribulokinase (cbbP).